The primary structure comprises 176 residues: MSKVKKNDETLSEVLVDVNRVTKVVKGGRRFAFSAYVVVGDKAGRVGAGHGKAKEVNEARGKAKQAAKKRMMKVPLYQNRTIHHDVVGKSGAAKVILRRAKAGTGIIAGGSMRAIFDSLGVHDIVAKSIGSTNVYAMISATFDALNKLASPKSIAMRRDKKVNEIFVKSSDIQVNE.

In terms of domain architecture, S5 DRBM spans 11-74 (LSEVLVDVNR…QAAKKRMMKV (64 aa)).

It belongs to the universal ribosomal protein uS5 family. Part of the 30S ribosomal subunit. Contacts proteins S4 and S8.

Its function is as follows. With S4 and S12 plays an important role in translational accuracy. Functionally, located at the back of the 30S subunit body where it stabilizes the conformation of the head with respect to the body. The sequence is that of Small ribosomal subunit protein uS5 from Rickettsia massiliae (strain Mtu5).